A 626-amino-acid chain; its full sequence is Trehalase (626 aa).

Residues 1 to 35 (MASSCSIRCGSRNILVNAAATFLALLVVLRCFANA) form the signal peptide. At 36-595 (EKPSPCQSDV…STPQPVVVST (560 aa)) the chain is on the extracellular side. A glycan (N-linked (GlcNAc...) asparagine) is linked at asparagine 104. Residues arginine 181, 188–189 (WD), asparagine 225, and 234–236 (RSQ) contribute to the substrate site. The N-linked (GlcNAc...) asparagine glycan is linked to asparagine 274. Substrate contacts are provided by residues 299 to 301 (RPE) and glycine 333. Aspartate 335 functions as the Proton donor/acceptor in the catalytic mechanism. Asparagine 350, asparagine 384, asparagine 498, and asparagine 525 each carry an N-linked (GlcNAc...) asparagine glycan. Catalysis depends on glutamate 532, which acts as the Proton donor/acceptor. Glutamate 547 contributes to the substrate binding site. A helical transmembrane segment spans residues 596-616 (AGQVMTGILALVISLAAGFIG). At 617 to 626 (KMRCANNAAQ) the chain is on the cytoplasmic side.

Belongs to the glycosyl hydrolase 37 family. In terms of assembly, monomer. Glycosylated; contains 3.1% carbohydrates.

The protein resides in the membrane. The enzyme catalyses alpha,alpha-trehalose + H2O = alpha-D-glucose + beta-D-glucose. With respect to regulation, inhibited by sodium, potassium and ammonium ions, and by TEMED. The chain is Trehalase from Apis mellifera (Honeybee).